Reading from the N-terminus, the 395-residue chain is Acid ceramidase (395 aa).

An N-terminal signal peptide occupies residues 1-21 (MLGRSRLTFVLLAAAVTCAEA). Residues Cys-31 and Cys-340 are joined by a disulfide bond. Cys-143 serves as the catalytic Nucleophile. N-linked (GlcNAc...) asparagine glycans are attached at residues Asn-173, Asn-259, Asn-286, and Asn-348. A disulfide bridge connects residues Cys-388 and Cys-392.

The protein belongs to the acid ceramidase family. As to quaternary structure, heterodimer; disulfide-linked. The heterodimer is composed of the disulfide-linked alpha and beta chains produced by autocatalytic cleavage of the precursor. In terms of processing, N-glycosylated. Post-translationally, proteolytically cleaved into two chains alpha and beta that remain associated via a disulfide bond. Cleavage gives rise to a conformation change that activates the enzyme. The same catalytic Cys residue mediates the autoproteolytic cleavage and subsequent hydrolysis of lipid substrates. The beta chain may undergo an additional C-terminal processing.

It is found in the lysosome. It localises to the secreted. It carries out the reaction an N-acylsphing-4-enine + H2O = sphing-4-enine + a fatty acid. It catalyses the reaction N-dodecanoylsphing-4-enine + H2O = dodecanoate + sphing-4-enine. The catalysed reaction is N-tetradecanoylsphing-4-enine + H2O = tetradecanoate + sphing-4-enine. The enzyme catalyses N-hexadecanoylsphing-4-enine + H2O = sphing-4-enine + hexadecanoate. It carries out the reaction N-octadecanoylsphing-4-enine + H2O = sphing-4-enine + octadecanoate. It catalyses the reaction N-dodecanoyl-(4R)-hydroxysphinganine + H2O = (4R)-hydroxysphinganine + dodecanoate. The catalysed reaction is N-(dodecanoyl)-sphinganine + H2O = dodecanoate + sphinganine. The enzyme catalyses N-(acetyl)-sphing-4-enine + H2O = sphing-4-enine + acetate. It carries out the reaction N-(hexanoyl)sphing-4-enine + H2O = hexanoate + sphing-4-enine. It catalyses the reaction N-octanoylsphing-4-enine + H2O = octanoate + sphing-4-enine. The catalysed reaction is N-(9Z-octadecenoyl)-sphing-4-enine + H2O = sphing-4-enine + (9Z)-octadecenoate. The enzyme catalyses N-dodecanoylethanolamine + H2O = dodecanoate + ethanolamine. The protein operates within lipid metabolism; sphingolipid metabolism. Functionally, lysosomal ceramidase that hydrolyzes sphingolipid ceramides into sphingosine and free fatty acids at acidic pH. Ceramides, sphingosine, and its phosphorylated form sphingosine-1-phosphate are bioactive lipids that mediate cellular signaling pathways regulating several biological processes including cell proliferation, apoptosis and differentiation. Has a higher catalytic efficiency towards C12-ceramides versus other ceramides. Also catalyzes the reverse reaction allowing the synthesis of ceramides from fatty acids and sphingosine. For the reverse synthetic reaction, the natural sphingosine D-erythro isomer is more efficiently utilized as a substrate compared to D-erythro-dihydrosphingosine and D-erythro-phytosphingosine, while the fatty acids with chain lengths of 12 or 14 carbons are the most efficiently used. Also has an N-acylethanolamine hydrolase activity. By regulating the levels of ceramides, sphingosine and sphingosine-1-phosphate in the epidermis, mediates the calcium-induced differentiation of epidermal keratinocytes. Also indirectly regulates tumor necrosis factor/TNF-induced apoptosis. By regulating the intracellular balance between ceramides and sphingosine, in adrenocortical cells, probably also acts as a regulator of steroidogenesis. In Heterocephalus glaber (Naked mole rat), this protein is Acid ceramidase.